The primary structure comprises 386 residues: Putrescine N-methyltransferase 4 (386 aa).

Polar residues-rich tracts occupy residues 1 to 14 (MEVI…STIF), 23 to 48 (GHQS…GHHN), and 57 to 87 (HQNG…NGNE). Residues 1–87 (MEVISTNTNG…GTISHDNGNE (87 aa)) form a disordered region. Residues 97–334 (LGWFSEFSAL…GVIGYMLCST (238 aa)) form the PABS domain. S-adenosyl-L-methionine-binding positions include glutamine 128, glutamate 203, and 234 to 235 (DG). Aspartate 253 (proton acceptor) is an active-site residue. Residue tyrosine 322 coordinates S-adenosyl-L-methionine.

Belongs to the class I-like SAM-binding methyltransferase superfamily. Putrescine methyltransferase family. Predominantly expressed in roots.

The enzyme catalyses putrescine + S-adenosyl-L-methionine = N-methylputrescine + S-adenosyl-L-homocysteine + H(+). It functions in the pathway alkaloid biosynthesis; nicotine biosynthesis. Functionally, involved in the biosynthesis of pyridine alkaloid natural products, leading mainly to the production of anabasine, anatabine, nicotine and nornicotine, effective deterrents against herbivores with antiparasitic and pesticide properties (neurotoxins); nornicotine serves as the precursor in the synthesis of the carcinogen compound N'-nitrosonornicotine (NNN). Methyltransferase that mediates the conversion of putrescine to N-methylputrescine. Promotes leaves ripening. This is Putrescine N-methyltransferase 4 from Nicotiana tabacum (Common tobacco).